The sequence spans 120 residues: Ribonuclease P protein component (120 aa).

Belongs to the RnpA family. As to quaternary structure, consists of a catalytic RNA component (M1 or rnpB) and a protein subunit.

It carries out the reaction Endonucleolytic cleavage of RNA, removing 5'-extranucleotides from tRNA precursor.. Its function is as follows. RNaseP catalyzes the removal of the 5'-leader sequence from pre-tRNA to produce the mature 5'-terminus. It can also cleave other RNA substrates such as 4.5S RNA. The protein component plays an auxiliary but essential role in vivo by binding to the 5'-leader sequence and broadening the substrate specificity of the ribozyme. In Mycobacterium leprae (strain Br4923), this protein is Ribonuclease P protein component.